The primary structure comprises 440 residues: Ribulose bisphosphate carboxylase large chain (440 aa).

Lysine 4 carries the N6,N6,N6-trimethyllysine modification. Residues asparagine 113 and threonine 163 each contribute to the substrate site. Lysine 165 serves as the catalytic Proton acceptor. Residue lysine 167 participates in substrate binding. The Mg(2+) site is built by lysine 191, aspartate 193, and glutamate 194. At lysine 191 the chain carries N6-carboxylysine. Histidine 284 serves as the catalytic Proton acceptor. Substrate contacts are provided by arginine 285, histidine 317, and serine 369.

It belongs to the RuBisCO large chain family. Type I subfamily. Heterohexadecamer of 8 large chains and 8 small chains; disulfide-linked. The disulfide link is formed within the large subunit homodimers. Mg(2+) serves as cofactor. In terms of processing, the disulfide bond which can form in the large chain dimeric partners within the hexadecamer appears to be associated with oxidative stress and protein turnover.

It is found in the plastid. Its subcellular location is the chloroplast. The enzyme catalyses 2 (2R)-3-phosphoglycerate + 2 H(+) = D-ribulose 1,5-bisphosphate + CO2 + H2O. It catalyses the reaction D-ribulose 1,5-bisphosphate + O2 = 2-phosphoglycolate + (2R)-3-phosphoglycerate + 2 H(+). Its function is as follows. RuBisCO catalyzes two reactions: the carboxylation of D-ribulose 1,5-bisphosphate, the primary event in carbon dioxide fixation, as well as the oxidative fragmentation of the pentose substrate in the photorespiration process. Both reactions occur simultaneously and in competition at the same active site. This is Ribulose bisphosphate carboxylase large chain from Pteris vittata (Chinese ladder brake).